We begin with the raw amino-acid sequence, 103 residues long: Iron-sulfur cluster assembly protein CyaY (103 aa).

The protein belongs to the frataxin family.

Functionally, involved in iron-sulfur (Fe-S) cluster assembly. May act as a regulator of Fe-S biogenesis. This chain is Iron-sulfur cluster assembly protein CyaY, found in Rickettsia rickettsii (strain Iowa).